The chain runs to 224 residues: dTDP-fucosamine acetyltransferase (224 aa).

The region spanning 94–224 (PALRQLASAA…VESTAYWLYR (131 aa)) is the N-acetyltransferase domain. Acetyl-CoA is bound by residues 168-174 (LAGRGAG), Asn201, and Arg207. Tyr208 functions as the Proton donor in the catalytic mechanism.

The protein belongs to the WecD family. In terms of assembly, homodimer.

The catalysed reaction is dTDP-4-amino-4,6-dideoxy-alpha-D-galactose + acetyl-CoA = dTDP-4-acetamido-4,6-dideoxy-alpha-D-galactose + CoA + H(+). The protein operates within bacterial outer membrane biogenesis; enterobacterial common antigen biosynthesis. Functionally, catalyzes the acetylation of dTDP-fucosamine (dTDP-4-amino-4,6-dideoxy-D-galactose) to dTDP-Fuc4NAc, which is utilized in the biosynthesis of the enterobacterial common antigen (ECA). The protein is dTDP-fucosamine acetyltransferase of Escherichia coli O6:H1 (strain CFT073 / ATCC 700928 / UPEC).